The primary structure comprises 214 residues: MKLLILTCLVAVALARPKHPINHRGLSPEVPNENLLRFVVAPFPEVFRKENINELSKDIGSESTEDQAMEDAKQMKAGSSSSSEEIVPNSAEQKYIQKEDVPSERYLGYLEQLLRLKKYNVPQLEIVPKSAEEQLHSMKEGNPAHQKQPMIAVNQELAYFYPQLFRQFYQLDAYPSGAWYYLPLGTQYTDAPSFSDIPNPIGSENSGKTTMPLW.

The first 15 residues, 1–15, serve as a signal peptide directing secretion; sequence MKLLILTCLVAVALA. The interval 59 to 91 is disordered; the sequence is IGSESTEDQAMEDAKQMKAGSSSSSEEIVPNSA. Serine 61, serine 63, serine 79, serine 80, serine 81, serine 82, serine 83, serine 90, and serine 130 each carry phosphoserine.

This sequence belongs to the alpha-casein family. As to expression, mammary gland specific. Secreted in milk.

Its subcellular location is the secreted. Important role in the capacity of milk to transport calcium phosphate. In Capra hircus (Goat), this protein is Alpha-S1-casein (CSN1S1).